We begin with the raw amino-acid sequence, 3753 residues long: Intermembrane lipid transfer protein VPS13C (3753 aa).

One can recognise a Chorein N-terminal domain in the interval 3–116; that stretch reads LESVVADLLN…LQDVKQKELS (114 aa). A Phosphoserine modification is found at Ser132. A compositionally biased stretch (basic residues) spans 150–164; it reads GRKRKKHKKHFKKPF. The disordered stretch occupies residues 150-176; sequence GRKRKKHKKHFKKPFKGLDRSKDKPKE. The segment covering 165-176 has biased composition (basic and acidic residues); that stretch reads KGLDRSKDKPKE. Thr614 carries the post-translational modification Phosphothreonine. Ser619 bears the Phosphoserine mark. Thr624 is subject to Phosphothreonine. Phosphoserine occurs at positions 737, 842, 872, and 874. The FFAT motif lies at 877 to 883; it reads EYFDAED. A phosphoserine mark is found at Ser1979 and Ser2473. A required for late endosome/lysosome localization region spans residues 2415–3309; it reads DYSLKDRAPF…IQQDIDALNA (895 aa). The SHR-BD domain maps to 2766–3016; that stretch reads LSVFSPYWLI…RLFAWADPTG (251 aa). Positions 3310–3753 are required for lipid droplet localization; sequence ELMETSMTDM…VRLLRPQLPS (444 aa). Residues Arg3519 and Arg3526 each carry the omega-N-methylarginine modification. Lys3538 is modified (N6-acetyllysine). A Phosphoserine modification is found at Ser3641.

It belongs to the VPS13 family. In terms of tissue distribution, widely expressed.

The protein resides in the mitochondrion outer membrane. It localises to the lipid droplet. The protein localises to the endoplasmic reticulum membrane. Its subcellular location is the lysosome membrane. It is found in the late endosome membrane. Functionally, mediates the transfer of lipids between membranes at organelle contact sites. Necessary for proper mitochondrial function and maintenance of mitochondrial transmembrane potential. Involved in the regulation of PINK1/PRKN-mediated mitophagy in response to mitochondrial depolarization. This chain is Intermembrane lipid transfer protein VPS13C, found in Homo sapiens (Human).